The chain runs to 364 residues: UDP-arabinopyranose mutase 1 (364 aa).

The short motif at 110-112 (DDD) is the DXD motif element. Residue Arg-158 is glycosylated (N-linked (Glc...) arginine).

Belongs to the RGP family. Heteromers with UAM2 and UAM3. Requires Mn(2+) as cofactor. Mg(2+) serves as cofactor. Post-translationally, reversibly glycosylated in vitro at Arg-158 by UDP-glucose. Reversibly glycosylated by UDP-xylose and UDP-galactose.

It localises to the golgi apparatus. It catalyses the reaction UDP-beta-L-arabinofuranose = UDP-beta-L-arabinopyranose. Its function is as follows. UDP-L-arabinose mutase involved in the biosynthesis of cell wall non-cellulosic polysaccharides. Catalyzes the interconvertion of UDP-L-arabinopyranose (UDP-Arap) and UDP-L-arabinofuranose (UDP-Araf). Preferentially catalyzes the formation of UDP-Arap from UDP-Araf. At thermodynamic equilibrium in vitro the ratio of the pyranose form over the furanose form is 90:10. Is probably active as heteromer in vivo. The protein is UDP-arabinopyranose mutase 1 of Oryza sativa subsp. japonica (Rice).